The primary structure comprises 301 residues: Tetrapeptide repeat homeobox protein 2 (301 aa).

2 disordered regions span residues 1-27 (MQDP…RTVY) and 273-301 (SLST…LLDL). Basic and acidic residues-rich tracts occupy residues 16-26 (PPRRQRQERTV) and 281-292 (YKEEDGFVDKNH). Positions 20-79 (QRQERTVYTESQQKVLEFYFQKDQYPNYDQRLNLAEMLSLREQQLQVWFKNRRAKLARER) form a DNA-binding region, homeobox.

This sequence belongs to the paired homeobox family.

It localises to the nucleus. In terms of biological role, transcription factor expressed after fertilization required for zygotic genome activation (ZGA), a critical event in early embryonic development during which the developmental control passes from maternally provided mRNAs to the expression of the zygotic genome after fertilization. Binds and activates expression of key ZGA marker genes, such as NANOGNB, ZSCAN4, DUXB, KLF5 and DPPA3. Binds to regulatory DNA sequences containing a 5'-TAATCC-3' sequence motif. The chain is Tetrapeptide repeat homeobox protein 2 from Homo sapiens (Human).